Reading from the N-terminus, the 346-residue chain is Protein-glutamate methylesterase/protein-glutamine glutaminase (346 aa).

One can recognise a Response regulatory domain in the interval K6–L123. D57 is modified (4-aspartylphosphate). A CheB-type methylesterase domain is found at P155–R346. Active-site residues include S166, H193, and D289.

It belongs to the CheB family. In terms of processing, phosphorylated by CheA. Phosphorylation of the N-terminal regulatory domain activates the methylesterase activity.

Its subcellular location is the cytoplasm. It carries out the reaction [protein]-L-glutamate 5-O-methyl ester + H2O = L-glutamyl-[protein] + methanol + H(+). It catalyses the reaction L-glutaminyl-[protein] + H2O = L-glutamyl-[protein] + NH4(+). Involved in chemotaxis. Part of a chemotaxis signal transduction system that modulates chemotaxis in response to various stimuli. Catalyzes the demethylation of specific methylglutamate residues introduced into the chemoreceptors (methyl-accepting chemotaxis proteins or MCP) by CheR. Also mediates the irreversible deamidation of specific glutamine residues to glutamic acid. This Halalkalibacterium halodurans (strain ATCC BAA-125 / DSM 18197 / FERM 7344 / JCM 9153 / C-125) (Bacillus halodurans) protein is Protein-glutamate methylesterase/protein-glutamine glutaminase.